The following is a 193-amino-acid chain: Pyridoxal 5'-phosphate synthase subunit PdxT (193 aa).

48-50 contributes to the L-glutamine binding site; that stretch reads GES. The active-site Nucleophile is Cys80. L-glutamine contacts are provided by residues Arg107 and 136–137; that span reads IR. Catalysis depends on charge relay system residues His172 and Glu174.

It belongs to the glutaminase PdxT/SNO family. In terms of assembly, in the presence of PdxS, forms a dodecamer of heterodimers. Only shows activity in the heterodimer.

It carries out the reaction aldehydo-D-ribose 5-phosphate + D-glyceraldehyde 3-phosphate + L-glutamine = pyridoxal 5'-phosphate + L-glutamate + phosphate + 3 H2O + H(+). The catalysed reaction is L-glutamine + H2O = L-glutamate + NH4(+). It functions in the pathway cofactor biosynthesis; pyridoxal 5'-phosphate biosynthesis. Catalyzes the hydrolysis of glutamine to glutamate and ammonia as part of the biosynthesis of pyridoxal 5'-phosphate. The resulting ammonia molecule is channeled to the active site of PdxS. The polypeptide is Pyridoxal 5'-phosphate synthase subunit PdxT (Clostridium botulinum (strain Loch Maree / Type A3)).